The chain runs to 121 residues: MALNIENIIAEIKEASILELNDLVKAIEEEFGVTAAAPVAAVAAGGAEEATKDSFDVELTAAGDKKVGVIKAVREITGLGLKEAKGLVDGAPANIKEGVAAAEAEEIKAKLEEAGATITLK.

The protein belongs to the bacterial ribosomal protein bL12 family. Homodimer. Part of the ribosomal stalk of the 50S ribosomal subunit. Forms a multimeric L10(L12)X complex, where L10 forms an elongated spine to which 2 to 4 L12 dimers bind in a sequential fashion. Binds GTP-bound translation factors.

Forms part of the ribosomal stalk which helps the ribosome interact with GTP-bound translation factors. Is thus essential for accurate translation. In Streptococcus uberis (strain ATCC BAA-854 / 0140J), this protein is Large ribosomal subunit protein bL12.